The sequence spans 803 residues: Translation initiation factor IF-2 (803 aa).

2 disordered regions span residues 95–125 (PVVE…EKAE) and 138–178 (EVKE…EREE). Positions 111–121 (VPLTSDTTNLN) are enriched in polar residues. Positions 138-155 (EVKEEAKKTPSEKKETPK) are enriched in basic and acidic residues. The span at 156-167 (KGPRKETRRSRK) shows a compositional bias: basic residues. Positions 168-178 (PDKEDKWEREE) are enriched in basic and acidic residues. A tr-type G domain is found at 302–471 (PRAPVVTIMG…LLQAEVLELK (170 aa)). Residues 311-318 (GHVDHGKT) are G1. Position 311–318 (311–318 (GHVDHGKT)) interacts with GTP. The interval 336-340 (GITQH) is G2. The G3 stretch occupies residues 357 to 360 (DTPG). Residues 357–361 (DTPGH) and 411–414 (NKID) contribute to the GTP site. A G4 region spans residues 411 to 414 (NKID). Residues 447-449 (SAK) are G5.

The protein belongs to the TRAFAC class translation factor GTPase superfamily. Classic translation factor GTPase family. IF-2 subfamily.

The protein localises to the cytoplasm. Its function is as follows. One of the essential components for the initiation of protein synthesis. Protects formylmethionyl-tRNA from spontaneous hydrolysis and promotes its binding to the 30S ribosomal subunits. Also involved in the hydrolysis of GTP during the formation of the 70S ribosomal complex. In Coxiella burnetii (strain RSA 331 / Henzerling II), this protein is Translation initiation factor IF-2.